A 255-amino-acid chain; its full sequence is Small ribosomal subunit protein uS2 (255 aa).

It belongs to the universal ribosomal protein uS2 family.

This is Small ribosomal subunit protein uS2 from Streptococcus uberis (strain ATCC BAA-854 / 0140J).